The following is a 303-amino-acid chain: Putative monooxygenase p33MONOX (303 aa).

Disordered stretches follow at residues 1–20 (MASRQPEVPALAPSGPLGKM), 37–56 (LEDPAPMTPPPSDMGSIPWK), 66–96 (HLDKTEEGAASVSSLAVTPSPATDSSDKAPV), 156–233 (KLQS…LQKS), and 260–283 (RVGEDPATFKPPKMDVPMVEGKKQ). At threonine 44 the chain carries Phosphothreonine. The short motif at 67–77 (LDKTEEGAASV) is the Flavin-containing monooxygenase motif element. A compositionally biased stretch (polar residues) spans 76 to 89 (SVSSLAVTPSPATD). The segment covering 170–183 (ASAQSTPSSTPHAS) has biased composition (low complexity). Residue threonine 175 is modified to Phosphothreonine. Position 183 is a phosphoserine (serine 183).

It belongs to the P33MONOX family. Interacts with NELFB, NOL12 and PRNP. As to expression, expressed in neuronal pyramidal cells of the hippocampus and in the neurons of the cortex.

The protein localises to the cytoplasm. In terms of biological role, potential NADPH-dependent oxidoreductase. May be involved in the regulation of neuronal survival, differentiation and axonal outgrowth. The protein is Putative monooxygenase p33MONOX (P33monox) of Mus musculus (Mouse).